The primary structure comprises 288 residues: MKIAIVIDSSSGLTKEQANKRGWYFLPLNIDIDEKTYKDGIDLDNKNFFEIFKKNSKTSTSASSRGEIISLFDDITSKYDKVVVFPISYKLSSQYQNLDLIAREYKNIHIVKSKHLSFLTIVQLIKFEKAIGQNQSFDEELKKLSHWDESQKVLLIPEYNDALVAGGRLSPKAAALAKVLKVVPIIKFENGELLKEGKGISFQKTLTKLISSLSGKYSKDSKNYFPVILHAQNSNISFYEEHFLNEFGKKPLILSLPSVISVHTGLGAIAISLVKVDKDVIDQIVEHF.

One can recognise a DegV domain in the interval 3–275; that stretch reads IAIVIDSSSG…LGAIAISLVK (273 aa). Positions 61 and 92 each coordinate hexadecanoate.

Functionally, may bind long-chain fatty acids, such as palmitate, and may play a role in lipid transport or fatty acid metabolism. The sequence is that of DegV domain-containing protein MYPU_3590 from Mycoplasmopsis pulmonis (strain UAB CTIP) (Mycoplasma pulmonis).